Here is a 349-residue protein sequence, read N- to C-terminus: Cobalt-precorrin-5B C(1)-methyltransferase (349 aa).

The protein belongs to the CbiD family.

The catalysed reaction is Co-precorrin-5B + S-adenosyl-L-methionine = Co-precorrin-6A + S-adenosyl-L-homocysteine. It functions in the pathway cofactor biosynthesis; adenosylcobalamin biosynthesis; cob(II)yrinate a,c-diamide from sirohydrochlorin (anaerobic route): step 6/10. In terms of biological role, catalyzes the methylation of C-1 in cobalt-precorrin-5B to form cobalt-precorrin-6A. The protein is Cobalt-precorrin-5B C(1)-methyltransferase of Saccharolobus islandicus (strain M.16.27) (Sulfolobus islandicus).